A 151-amino-acid chain; its full sequence is Ribonuclease H (151 aa).

One can recognise an RNase H type-1 domain in the interval 1–141 (MKHVDIFTDG…ADELARRGME (141 aa)). Mg(2+)-binding residues include Asp-9, Glu-47, Asp-69, and Asp-133.

The protein belongs to the RNase H family. As to quaternary structure, monomer. Requires Mg(2+) as cofactor.

The protein localises to the cytoplasm. It catalyses the reaction Endonucleolytic cleavage to 5'-phosphomonoester.. Endonuclease that specifically degrades the RNA of RNA-DNA hybrids. In Rhizobium etli (strain ATCC 51251 / DSM 11541 / JCM 21823 / NBRC 15573 / CFN 42), this protein is Ribonuclease H.